Here is a 162-residue protein sequence, read N- to C-terminus: uncharacterized protein (162 aa).

This is an uncharacterized protein from Rhodobacter capsulatus (Rhodopseudomonas capsulata).